Reading from the N-terminus, the 86-residue chain is MGINQSQHSMGVNQSHHFMGVNQSHHFMGINQSQHSMGVNQHIIGDSYLISCMVVAPCCLKACMVLAPCCLKACMVLAPCCLKAAR.

This is an uncharacterized protein from African swine fever virus (strain Badajoz 1971 Vero-adapted) (Ba71V).